The primary structure comprises 193 residues: Glycerol-3-phosphate acyltransferase (193 aa).

Helical transmembrane passes span 2-22 (LIALLIILAYVIGSIPSGLIV), 76-96 (VPIHPLLAGVAAVIGHVFPVF), 112-132 (LLFYAPLLFVTMVAVFFVFLF), and 152-172 (CLFVKDPYLLVVVTLLTAFVI).

This sequence belongs to the PlsY family. In terms of assembly, probably interacts with PlsX.

The protein resides in the cell membrane. It carries out the reaction an acyl phosphate + sn-glycerol 3-phosphate = a 1-acyl-sn-glycero-3-phosphate + phosphate. Its pathway is lipid metabolism; phospholipid metabolism. In terms of biological role, catalyzes the transfer of an acyl group from acyl-phosphate (acyl-PO(4)) to glycerol-3-phosphate (G3P) to form lysophosphatidic acid (LPA). This enzyme utilizes acyl-phosphate as fatty acyl donor, but not acyl-CoA or acyl-ACP. This is Glycerol-3-phosphate acyltransferase from Bacillus velezensis (strain DSM 23117 / BGSC 10A6 / LMG 26770 / FZB42) (Bacillus amyloliquefaciens subsp. plantarum).